Consider the following 620-residue polypeptide: Long-chain fatty acid transport protein 2 (620 aa).

The Lumenal segment spans residues 1–4; it reads MLSA. A helical transmembrane segment spans residues 5 to 27; the sequence is IYTVLAGLLFLPLLVNLCCPYFF. Residues 28–106 lie on the Cytoplasmic side of the membrane; the sequence is QDIGYFLKVA…DHLGLRQGDC (79 aa). Residues 107 to 127 form a helical membrane-spanning segment; that stretch reads VALLMGNEPAYVWLWLGLVKL. The Lumenal segment spans residues 128-261; sequence GCAMACLNYN…SGLKADDVIY (134 aa). 222 to 233 is an AMP binding site; it reads YIYTSGTTGLPK. Residues 262 to 282 traverse the membrane as a helical segment; that stretch reads ITLPFYHSAALLIGIHGCIVA. At 283 to 620 the chain is on the cytoplasmic side; that stretch reads GATLALRTKF…NAISAKTLKL (338 aa). N6-acetyllysine is present on K291. At T577 the chain carries Phosphothreonine.

Belongs to the ATP-dependent AMP-binding enzyme family. Expressed in liver, kidney, placenta, intestine, brain, heart, and colon. Predominantly expressed in liver. In terms of tissue distribution, expressed in liver, placenta, and intestine, but much lower relative to isoform 1.

It localises to the endoplasmic reticulum membrane. Its subcellular location is the peroxisome membrane. It is found in the cell membrane. The protein resides in the microsome. The enzyme catalyses a fatty acid(in) = a fatty acid(out). It catalyses the reaction (9Z)-octadecenoate(out) = (9Z)-octadecenoate(in). The catalysed reaction is a long-chain fatty acid + ATP + CoA = a long-chain fatty acyl-CoA + AMP + diphosphate. It carries out the reaction (5Z,8Z,11Z,14Z)-eicosatetraenoate + ATP + CoA = (5Z,8Z,11Z,14Z)-eicosatetraenoyl-CoA + AMP + diphosphate. The enzyme catalyses hexadecanoate + ATP + CoA = hexadecanoyl-CoA + AMP + diphosphate. It catalyses the reaction (9Z)-octadecenoate + ATP + CoA = (9Z)-octadecenoyl-CoA + AMP + diphosphate. The catalysed reaction is 3,7,11,15-tetramethylhexadecanoate + ATP + CoA = phytanoyl-CoA + AMP + diphosphate. It carries out the reaction (9Z,12Z,15Z)-octadecatrienoate + ATP + CoA = (9Z,12Z,15Z)-octadecatrienoyl-CoA + AMP + diphosphate. The enzyme catalyses 2,6,10,14-tetramethylpentadecanoate + ATP + CoA = pristanoyl-CoA + AMP + diphosphate. It catalyses the reaction (E)-hexadec-2-enoate + ATP + CoA = (2E)-hexadecenoyl-CoA + AMP + diphosphate. The catalysed reaction is a very long-chain fatty acid + ATP + CoA = a very long-chain fatty acyl-CoA + AMP + diphosphate. It carries out the reaction tetracosanoate + ATP + CoA = tetracosanoyl-CoA + AMP + diphosphate. The enzyme catalyses (4Z,7Z,10Z,13Z,16Z,19Z)-docosahexaenoate + ATP + CoA = (4Z,7Z,10Z,13Z,16Z,19Z)-docosahexaenoyl-CoA + AMP + diphosphate. It catalyses the reaction (25R)-3alpha,7alpha,12alpha-trihydroxy-5beta-cholestan-26-oate + ATP + CoA = (25R)-3alpha,7alpha,12alpha-trihydroxy-5beta-cholestan-26-oyl-CoA + AMP + diphosphate. Functionally, mediates the import of long-chain fatty acids (LCFA) into the cell by facilitating their transport across cell membranes, playing an important role in hepatic fatty acid uptake. Also functions as an acyl-CoA ligase catalyzing the ATP-dependent formation of fatty acyl-CoA using LCFA and very-long-chain fatty acids (VLCFA) as substrates, which prevents fatty acid efflux from cells and might drive more fatty acid uptake. Plays a pivotal role in regulating available LCFA substrates from exogenous sources in tissues undergoing high levels of beta-oxidation or triglyceride synthesis. Can also activate branched-chain fatty acids such as phytanic acid and pristanic acid. May contribute to the synthesis of sphingosine-1-phosphate. Does not activate C24 bile acids, cholate and chenodeoxycholate. In vitro, activates 3-alpha,7-alpha,12-alpha-trihydroxy-5-beta-cholestanate (THCA), the C27 precursor of cholic acid deriving from the de novo synthesis from cholesterol. However, it is not critical for THCA activation and bile synthesis in vivo. Its function is as follows. Exhibits both long-chain fatty acids (LCFA) transport activity and acyl CoA synthetase towards very long-chain fatty acids. Shows a preference for generating CoA derivatives of n-3 fatty acids, which are preferentially trafficked into phosphatidylinositol. Exhibits long-chain fatty acids (LCFA) transport activity but lacks acyl CoA synthetase towards very long-chain fatty acids. The protein is Long-chain fatty acid transport protein 2 (SLC27A2) of Homo sapiens (Human).